A 390-amino-acid polypeptide reads, in one-letter code: Protein phosphatase 1B (390 aa).

Basic and acidic residues predominate over residues 1–14; it reads MGAFLDKPKTEKHN. Positions 1–20 are disordered; it reads MGAFLDKPKTEKHNAHGAGN. A lipid anchor (N-myristoyl glycine) is attached at G2. K12 participates in a covalent cross-link: Glycyl lysine isopeptide (Lys-Gly) (interchain with G-Cter in ISG15). The 273-residue stretch at 23–295 folds into the PPM-type phosphatase domain; it reads RYGLSSMQGW…DNMSIVLVCF (273 aa). Mn(2+)-binding residues include D60, G61, D243, and D286. The interval 371–390 is disordered; that stretch reads NPNKDNDGGAGDLEDSLVAL. S386 carries the post-translational modification Phosphoserine.

It belongs to the PP2C family. As to quaternary structure, monomer. Interacts with PAK6. Interacts with the phosphorylated form of IKBKB/IKKB. Mg(2+) is required as a cofactor. Requires Mn(2+) as cofactor. In terms of processing, isgylation negatively regulates its activity. N-myristoylation is essential for the recognition of its substrates for dephosphorylation.

Its subcellular location is the cytoplasm. The protein resides in the cytosol. The protein localises to the membrane. The catalysed reaction is O-phospho-L-seryl-[protein] + H2O = L-seryl-[protein] + phosphate. The enzyme catalyses O-phospho-L-threonyl-[protein] + H2O = L-threonyl-[protein] + phosphate. Functionally, enzyme with a broad specificity. Dephosphorylates PRKAA1 and PRKAA2. Inhibits TBK1-mediated antiviral signaling by dephosphorylating it at 'Ser-172'. Plays an important role in the termination of TNF-alpha-mediated NF-kappa-B activation through dephosphorylating and inactivating IKBKB/IKKB. The protein is Protein phosphatase 1B (Ppm1b) of Rattus norvegicus (Rat).